Here is a 137-residue protein sequence, read N- to C-terminus: Active regulator of SIRT1 (137 aa).

R7 carries the citrulline modification. A compositionally biased stretch (low complexity) spans 14 to 24 (GAPEAPGAAPG). Positions 14-58 (GAPEAPGAAPGHTKPSQAPMKRTRKAKATQAQKLRNSAKGKVPKS) are disordered. S84 carries the post-translational modification Phosphoserine. Positions 96–120 (RQNRGRKACDRPVTKTKKKKKAEGT) are disordered.

This sequence belongs to the AROS family. As to quaternary structure, part of the small subunit (SSU) processome, composed of more than 70 proteins and the RNA chaperone small nucleolar RNA (snoRNA) U3. Interacts with RPS19; the interaction is direct and mediates the integration of RPS19 in state post-A1. Interacts with SIRT1. Post-translationally, citrullinated by PADI4.

Its subcellular location is the nucleus. The protein localises to the nucleolus. Functionally, part of the small subunit (SSU) processome, first precursor of the small eukaryotic ribosomal subunit. During the assembly of the SSU processome in the nucleolus, many ribosome biogenesis factors, an RNA chaperone and ribosomal proteins associate with the nascent pre-rRNA and work in concert to generate RNA folding, modifications, rearrangements and cleavage as well as targeted degradation of pre-ribosomal RNA by the RNA exosome. Acts as a chaperone that specifically mediates the integration of RPS19 in state post-A1. Direct regulator of SIRT1. Enhances SIRT1-mediated deacetylation of p53/TP53, thereby participating in inhibition of p53/TP53-mediated transcriptional activity. This chain is Active regulator of SIRT1 (RPS19BP1), found in Bos taurus (Bovine).